The chain runs to 461 residues: Alcaligin biosynthesis enzyme (461 aa).

9-15 (VAIGIGP) is a binding site for FAD.

The protein belongs to the lysine N(6)-hydroxylase/L-ornithine N(5)-oxygenase family. FAD serves as cofactor.

It participates in siderophore biosynthesis; alcaligin biosynthesis. The chain is Alcaligin biosynthesis enzyme (alcA) from Bordetella parapertussis (strain 12822 / ATCC BAA-587 / NCTC 13253).